We begin with the raw amino-acid sequence, 305 residues long: Aquaporin-1 (305 aa).

A disordered region spans residues 1–34; the sequence is MSSNDSNDTDKQHTRLDPTGVDDAYIPPEQPETK. Topologically, residues 1–48 are cytoplasmic; that stretch reads MSSNDSNDTDKQHTRLDPTGVDDAYIPPEQPETKHHRFKISKDTLRNH. The helical transmembrane segment at 49–69 threads the bilayer; it reads FIAAAGEFCGTFMFLWCAYVI. The Extracellular portion of the chain corresponds to 70–91; the sequence is CNVANHDVALVAAPDGSHPGQL. The helical transmembrane segment at 92 to 112 threads the bilayer; the sequence is IMIAIGFGFSVMFSIWCFAGV. Residues 113–136 lie on the Cytoplasmic side of the membrane; it reads SGGALNPAMSLSLCLARAVSPTRC. The NPA 1 signature appears at 118–120; sequence NPA. The helical transmembrane segment at 137-157 threads the bilayer; that stretch reads VVMWVSQIVAGMAAGGAASAM. The Extracellular portion of the chain corresponds to 158–176; it reads TPGEVLFANSLGLGCSRTR. A helical membrane pass occupies residues 177 to 197; it reads GLFLEMFGTAILCLTVLMTAV. The Cytoplasmic segment spans residues 198–203; that stretch reads EKRETN. Residues 204–224 form a helical membrane-spanning segment; the sequence is FMAALPIGISLFIAHVALTAY. Topologically, residues 225–248 are extracellular; sequence TGTGVNPARSLGAAVAARYFPHYH. The short motif at 230-232 is the NPA 2 element; it reads NPA. Residues 249–269 traverse the membrane as a helical segment; that stretch reads WIYWIGTLLGSILAWSVWQLL. Residues 270 to 305 lie on the Cytoplasmic side of the membrane; sequence QILDYTTYVTAEKAASTKEKAQKKGETSSSSAVAEV. Over residues 286–295 the composition is skewed to basic and acidic residues; that stretch reads TKEKAQKKGE. The interval 286 to 305 is disordered; it reads TKEKAQKKGETSSSSAVAEV. A compositionally biased stretch (polar residues) spans 296–305; that stretch reads TSSSSAVAEV.

It belongs to the MIP/aquaporin (TC 1.A.8) family.

The protein resides in the endoplasmic reticulum membrane. Its subcellular location is the cell membrane. In terms of biological role, water channel required to facilitate the transport of water across membranes. Involved in sporulation, freeze tolerance and osmotolerance. Is non-functional in most laboratory strains. The chain is Aquaporin-1 (AQY1) from Saccharomyces cerevisiae (strain YJM789) (Baker's yeast).